Reading from the N-terminus, the 1044-residue chain is Elongation factor 3B (1044 aa).

An N-acetylserine modification is found at Ser-2. An HEAT 1 repeat occupies 5–42 (QQSITVLEELFRKLETATSETREGISSELSSFLNGNII). ADP contacts are provided by Ile-42, His-44, and Ser-83. 6 HEAT repeats span residues 86-123 (PYIV…AVNP), 124-162 (VAVK…AAKE), 166-203 (LRMP…TVDN), 205-241 (DIER…EVTP), 242-279 (ATLS…LVED), and 285-323 (PFLG…VGNV). Residues Lys-187 and Lys-196 each carry the N6,N6,N6-trimethyllysine modification. ADP-binding residues include Thr-392, His-396, and Glu-397. ABC transporter domains are found at residues 426 to 641 (DEGE…YYEL) and 667 to 993 (VKVS…KKEE). Residue Asn-703 coordinates ADP. Residue Lys-789 is modified to N6,N6,N6-trimethyllysine. 3 residues coordinate ADP: Glu-922, Asn-925, and His-951. Thr-972 bears the Phosphothreonine mark. Ser-974 is modified (phosphoserine). The disordered stretch occupies residues 975 to 1044 (GHNWVAGQGA…DEYVSSDEDF (70 aa)). A compositionally biased stretch (basic and acidic residues) spans 987–999 (RIEKKEEEGDKFD). The span at 1020-1031 (RKKKKERMKKKK) shows a compositional bias: basic residues. A phosphoserine mark is found at Ser-1039 and Ser-1040.

The protein belongs to the ABC transporter superfamily. ABCF family. EF3 subfamily. In terms of assembly, monomer.

The protein localises to the cytoplasm. The catalysed reaction is ATP + H2O = ADP + phosphate + H(+). The protein operates within protein biosynthesis; polypeptide chain elongation. Its function is as follows. Ribosome-dependent ATPase that promotes the translation of proteins required for detoxification of reactive oxygen species. Required for the ATP-dependent release of deacylated tRNA from the ribosomal E-site during protein biosynthesis. Stimulates the eEF1A-dependent binding of aminoacyl-tRNA to the ribosomal A-site, which has reduced affinity for tRNA as long as the E-site is occupied. Assists translation termination by stimulating the release of nascent protein from the ribosome by release factors. The protein is Elongation factor 3B of Saccharomyces cerevisiae (strain ATCC 204508 / S288c) (Baker's yeast).